A 293-amino-acid polypeptide reads, in one-letter code: Notch homolog 2 N-terminal-like protein C (293 aa).

EGF-like domains lie at 42 to 81 (PPRM…EYCQ), 82 to 120 (HRDP…EDCQ), 123 to 161 (TSHP…KECQ), and 162 to 198 (WTDA…QKCE). 17 disulfides stabilise this stretch: C46-C59, C53-C69, C71-C80, C86-C97, C91-C108, C110-C119, C127-C139, C133-C149, C151-C160, C166-C177, C171-C186, C188-C197, C204-C216, C210-C225, C227-C236, C243-C254, and C248-C264. N-linked (GlcNAc...) asparagine glycosylation occurs at N64. N173 carries N-linked (GlcNAc...) asparagine glycosylation. An EGF-like 5; calcium-binding domain is found at 200–237 (DVNECDIPGHCQHGGTCLNLPGSYQCQCLQGFTGQYCD). The 38-residue stretch at 239–276 (LYVPCAPSPCVNGGTCRQTGDFTFECNCLPETVRRGTE) folds into the EGF-like 6 domain.

The protein belongs to the NOTCH family. In terms of assembly, interacts with NOTCH2. Interacts with DLL1; the interaction is direct. Expressed in radial glia neural stem cells during cortical development.

It localises to the secreted. Human-specific protein that promotes neural progenitor proliferation and evolutionary expansion of the brain neocortex by regulating the Notch signaling pathway. Able to promote neural progenitor self-renewal, possibly by down-regulating neuronal differentiation genes, thereby delaying the differentiation of neuronal progenitors and leading to an overall final increase in neuronal production. Acts by enhancing the Notch signaling pathway via two different mechanisms that probably work in parallel to reach the same effect. Enhances Notch signaling pathway in a non-cell-autonomous manner via direct interaction with NOTCH2. Also promotes Notch signaling pathway in a cell-autonomous manner through inhibition of cis DLL1-NOTCH2 interactions, which promotes neuronal differentiation. The chain is Notch homolog 2 N-terminal-like protein C from Homo sapiens (Human).